Reading from the N-terminus, the 251-residue chain is tRNA (guanine-N(1)-)-methyltransferase (251 aa).

S-adenosyl-L-methionine-binding positions include Gly-113 and 133 to 138; that span reads IGDYVL.

Belongs to the RNA methyltransferase TrmD family. In terms of assembly, homodimer.

The protein resides in the cytoplasm. It carries out the reaction guanosine(37) in tRNA + S-adenosyl-L-methionine = N(1)-methylguanosine(37) in tRNA + S-adenosyl-L-homocysteine + H(+). Specifically methylates guanosine-37 in various tRNAs. This is tRNA (guanine-N(1)-)-methyltransferase from Pectobacterium carotovorum subsp. carotovorum (strain PC1).